The sequence spans 55 residues: SICSEPKKVGRCKGYFPRFYFDSETGKCTPFIYGGCGGNGNNFETLHQCRAICRA.

The region spanning 3–53 (CSEPKKVGRCKGYFPRFYFDSETGKCTPFIYGGCGGNGNNFETLHQCRAIC) is the BPTI/Kunitz inhibitor domain. 3 disulfide bridges follow: Cys-3–Cys-53, Cys-12–Cys-36, and Cys-28–Cys-49.

It is found in the secreted. The protein resides in the nematocyst. Its function is as follows. Active against serine, cysteine, and aspartic proteases. Can bind vertebrate trypsin and chymotrypsin. The sequence is that of PI-stichotoxin-She2a from Stichodactyla helianthus (Sun anemone).